The sequence spans 525 residues: Bifunctional purine biosynthesis protein PurH (525 aa).

An MGS-like domain is found at 1–149 (MSDPVIKRAL…KNNESVTVVT (149 aa)).

Belongs to the PurH family.

It catalyses the reaction (6R)-10-formyltetrahydrofolate + 5-amino-1-(5-phospho-beta-D-ribosyl)imidazole-4-carboxamide = 5-formamido-1-(5-phospho-D-ribosyl)imidazole-4-carboxamide + (6S)-5,6,7,8-tetrahydrofolate. The catalysed reaction is IMP + H2O = 5-formamido-1-(5-phospho-D-ribosyl)imidazole-4-carboxamide. The protein operates within purine metabolism; IMP biosynthesis via de novo pathway; 5-formamido-1-(5-phospho-D-ribosyl)imidazole-4-carboxamide from 5-amino-1-(5-phospho-D-ribosyl)imidazole-4-carboxamide (10-formyl THF route): step 1/1. It functions in the pathway purine metabolism; IMP biosynthesis via de novo pathway; IMP from 5-formamido-1-(5-phospho-D-ribosyl)imidazole-4-carboxamide: step 1/1. This chain is Bifunctional purine biosynthesis protein PurH, found in Pelodictyon phaeoclathratiforme (strain DSM 5477 / BU-1).